Consider the following 141-residue polypeptide: Large ribosomal subunit protein uL11c (141 aa).

The protein belongs to the universal ribosomal protein uL11 family. In terms of assembly, part of the ribosomal stalk of the 50S ribosomal subunit. Interacts with L10 and the large rRNA to form the base of the stalk. L10 forms an elongated spine to which L12 dimers bind in a sequential fashion forming a multimeric L10(L12)X complex.

It localises to the plastid. The protein localises to the chloroplast. In terms of biological role, forms part of the ribosomal stalk which helps the ribosome interact with GTP-bound translation factors. The protein is Large ribosomal subunit protein uL11c of Pyropia yezoensis (Susabi-nori).